Reading from the N-terminus, the 244-residue chain is N-(5'-phosphoribosyl)anthranilate isomerase 3, chloroplastic (244 aa).

Residues 1-32 (MSTGISSDLHLHPRALNFSKTSKSGLSNRKVS) constitute a chloroplast transit peptide.

This sequence belongs to the TrpF family.

It is found in the plastid. It localises to the chloroplast. It carries out the reaction N-(5-phospho-beta-D-ribosyl)anthranilate = 1-(2-carboxyphenylamino)-1-deoxy-D-ribulose 5-phosphate. The protein operates within amino-acid biosynthesis; L-tryptophan biosynthesis; L-tryptophan from chorismate: step 3/5. The sequence is that of N-(5'-phosphoribosyl)anthranilate isomerase 3, chloroplastic (PAI3) from Arabidopsis thaliana (Mouse-ear cress).